The chain runs to 386 residues: 5-amino-6-(D-ribitylamino)uracil--L-tyrosine 4-hydroxyphenyl transferase (386 aa).

The Radical SAM core domain maps to 56–303 (VSYVINRNLN…MAVARLYLGD (248 aa)). Residues cysteine 70, cysteine 74, and cysteine 77 each coordinate [4Fe-4S] cluster.

It belongs to the radical SAM superfamily. CofH family. As to quaternary structure, consists of two subunits, CofG and CofH. [4Fe-4S] cluster is required as a cofactor.

It catalyses the reaction 5-amino-6-(D-ribitylamino)uracil + L-tyrosine + S-adenosyl-L-methionine = 5-amino-5-(4-hydroxybenzyl)-6-(D-ribitylimino)-5,6-dihydrouracil + 2-iminoacetate + 5'-deoxyadenosine + L-methionine + H(+). Its pathway is cofactor biosynthesis; coenzyme F0 biosynthesis. In terms of biological role, catalyzes the radical-mediated synthesis of 5-amino-5-(4-hydroxybenzyl)-6-(D-ribitylimino)-5,6-dihydrouracil from 5-amino-6-(D-ribitylamino)uracil and L-tyrosine. This is 5-amino-6-(D-ribitylamino)uracil--L-tyrosine 4-hydroxyphenyl transferase from Synechococcus elongatus (strain ATCC 33912 / PCC 7942 / FACHB-805) (Anacystis nidulans R2).